The sequence spans 632 residues: tRNA uridine 5-carboxymethylaminomethyl modification enzyme MnmG (632 aa).

Residue 13 to 18 participates in FAD binding; the sequence is GGGHAG. An NAD(+)-binding site is contributed by 273-287; sequence GPRYCPSIEDKIHRF.

It belongs to the MnmG family. In terms of assembly, homodimer. Heterotetramer of two MnmE and two MnmG subunits. Requires FAD as cofactor.

It localises to the cytoplasm. Functionally, NAD-binding protein involved in the addition of a carboxymethylaminomethyl (cmnm) group at the wobble position (U34) of certain tRNAs, forming tRNA-cmnm(5)s(2)U34. This Psychrobacter arcticus (strain DSM 17307 / VKM B-2377 / 273-4) protein is tRNA uridine 5-carboxymethylaminomethyl modification enzyme MnmG.